The sequence spans 249 residues: Voltage-gated potassium channel subunit beta-3 (249 aa).

Residues Asn-44, Ser-74, Arg-75, Gln-100, Trp-129, Ser-130, Pro-131, Leu-132, Ala-133, Cys-134, Lys-140, Lys-150, Gly-209, Ser-211, Gln-215, and Glu-218 each contribute to the NADP(+) site.

Belongs to the shaker potassium channel beta subunit family. Forms heteromultimeric complex with alpha subunits. Interacts with KCNA5 and KCNB2. Strong expression in brain, with highest levels in neocortical and allocortical regions, hippocampus, olfactory bulb and cerebellum. Also strong in kidney. Weak expression in lung, skeletal muscle and heart.

Its subcellular location is the cytoplasm. In terms of biological role, regulatory subunit of the voltage-gated potassium (Kv) channels composed of pore-forming and potassium-conducting alpha subunits and of regulatory beta subunit. The beta-3/KCNAB3 subunit may mediate closure of potassium channels. Enhances the expression of Kv2.2/KCNB2 alpha subunit-containing Kv channels but not Kv2.1/KCNB1. May display nicotinamide adenine dinucleotide phosphate (NADPH)-dependent aldoketoreductase activity. The binding of oxidized and reduced NADP(H) cofactors may be required for the regulation of potassium channel activity. The polypeptide is Voltage-gated potassium channel subunit beta-3 (Mus musculus (Mouse)).